The following is a 264-amino-acid chain: Small ribosomal subunit protein eS1 (264 aa).

Residues 232-264 are disordered; sequence HGEGGGSGKPSGDETGAKVERADGYEPPVQESV. Positions 242-255 are enriched in basic and acidic residues; sequence SGDETGAKVERADG.

It belongs to the eukaryotic ribosomal protein eS1 family. As to quaternary structure, component of the small ribosomal subunit. Mature ribosomes consist of a small (40S) and a large (60S) subunit. The 40S subunit contains about 33 different proteins and 1 molecule of RNA (18S). The 60S subunit contains about 49 different proteins and 3 molecules of RNA (28S, 5.8S and 5S). Part of the small subunit (SSU) processome, composed of more than 70 proteins and the RNA chaperone small nucleolar RNA (snoRNA) U3.

The protein resides in the cytoplasm. Its subcellular location is the nucleus. The protein localises to the nucleolus. Its function is as follows. Component of the small ribosomal subunit. The ribosome is a large ribonucleoprotein complex responsible for the synthesis of proteins in the cell. Part of the small subunit (SSU) processome, first precursor of the small eukaryotic ribosomal subunit. During the assembly of the SSU processome in the nucleolus, many ribosome biogenesis factors, an RNA chaperone and ribosomal proteins associate with the nascent pre-rRNA and work in concert to generate RNA folding, modifications, rearrangements and cleavage as well as targeted degradation of pre-ribosomal RNA by the RNA exosome. May play a role during erythropoiesis. This chain is Small ribosomal subunit protein eS1, found in Ophiophagus hannah (King cobra).